Consider the following 188-residue polypeptide: Putative manganese efflux pump MntP (188 aa).

The next 6 membrane-spanning stretches (helical) occupy residues 3-23, 41-61, 62-82, 107-129, 143-163, and 168-188; these read LSAT…ASIG, LIFG…GMLA, SQFV…FLGG, LLVT…LAFL, ATFL…PLLG, and ILGG…HFAG.

The protein belongs to the MntP (TC 9.B.29) family.

The protein resides in the cell inner membrane. In terms of biological role, probably functions as a manganese efflux pump. This chain is Putative manganese efflux pump MntP, found in Klebsiella pneumoniae (strain 342).